Reading from the N-terminus, the 301-residue chain is Cytidine deaminase 1 (301 aa).

CMP/dCMP-type deaminase domains lie at 23–156 (SVIQ…FGPD) and 188–301 (DSSA…CYEA). 64-66 (NVE) is a binding site for substrate. Position 77 (histidine 77) interacts with Zn(2+). Glutamate 79 acts as the Proton donor in catalysis. Zn(2+) contacts are provided by cysteine 104 and cysteine 107.

Belongs to the cytidine and deoxycytidylate deaminase family. Homodimer. It depends on Zn(2+) as a cofactor. As to expression, expressed in roots, rosette leaves, stems and flowers.

It carries out the reaction cytidine + H2O + H(+) = uridine + NH4(+). The catalysed reaction is 2'-deoxycytidine + H2O + H(+) = 2'-deoxyuridine + NH4(+). Its activity is regulated as follows. Inhibited by uridine, CMP and dCMP. This enzyme scavenges exogenous and endogenous cytidine and 2'-deoxycytidine for UMP synthesis. Functions as a conventional cytidine deaminase. Has no affinity for RNA and is not involved in RNA-editing by C-to-U deamination. The chain is Cytidine deaminase 1 (CDA1) from Arabidopsis thaliana (Mouse-ear cress).